We begin with the raw amino-acid sequence, 813 residues long: Putative ATPase, plasma membrane-like (813 aa).

Topologically, residues methionine 1–phenylalanine 66 are cytoplasmic. The chain crosses the membrane as a helical span at residues phenylalanine 67–methionine 86. The Extracellular segment spans residues leucine 87–arginine 94. Residues glutamine 95–glutamate 115 traverse the membrane as a helical segment. At aspartate 116–isoleucine 245 the chain is on the cytoplasmic side. The chain crosses the membrane as a helical span at residues glutamate 246–tryptophan 266. At isoleucine 267–valine 275 the chain is on the extracellular side. Residues isoleucine 276 to threonine 293 form a helical membrane-spanning segment. At valine 294–lysine 555 the chain is on the cytoplasmic side. Aspartate 331 (4-aspartylphosphate intermediate) is an active-site residue. Aspartate 500 and aspartate 504 together coordinate Mg(2+). Residues histidine 556–leucine 577 form a helical membrane-spanning segment. Topologically, residues isoleucine 578 to aspartate 582 are extracellular. Residues phenylalanine 583 to aspartate 605 traverse the membrane as a helical segment. The Cytoplasmic segment spans residues asparagine 606–isoleucine 622. Residues phenylalanine 623–alanine 643 form a helical membrane-spanning segment. At alanine 644–alanine 664 the chain is on the extracellular side. The chain crosses the membrane as a helical span at residues glutamate 665 to isoleucine 685. The Cytoplasmic portion of the chain corresponds to glutamine 686–glycine 697. Residues glutamate 698–alanine 718 traverse the membrane as a helical segment. Residues serine 719 to glutamate 726 lie on the Extracellular side of the membrane. Residues glycine 727–leucine 747 traverse the membrane as a helical segment. Residues aspartate 748–valine 813 lie on the Cytoplasmic side of the membrane. Serine 776 is modified (phosphoserine).

It belongs to the cation transport ATPase (P-type) (TC 3.A.3) family. Type IIIA subfamily.

It is found in the membrane. The polypeptide is Putative ATPase, plasma membrane-like (Arabidopsis thaliana (Mouse-ear cress)).